The following is a 269-amino-acid chain: Surfeit locus protein 4 (269 aa).

Helical transmembrane passes span 64 to 84, 92 to 112, 157 to 177, 179 to 199, 203 to 223, and 242 to 262; these read FLAS…CILV, YACF…SILW, MQLG…HFDM, FFYI…AIGF, LAAL…NAFW, and TMSV…GVSM. The Di-lysine motif signature appears at 266-269; that stretch reads KKEW.

It belongs to the SURF4 family.

The protein localises to the endoplasmic reticulum membrane. Its subcellular location is the endoplasmic reticulum-Golgi intermediate compartment membrane. It localises to the golgi apparatus membrane. Endoplasmic reticulum cargo receptor that mediates the export of lipoproteins by recruiting cargos into COPII vesicles to facilitate their secretion. Acts as a cargo receptor for lipoproteins bearing both APOB and APOA1, thereby regulating lipoprotein delivery and the maintenance of lipid homeostasis. The chain is Surfeit locus protein 4 from Gallus gallus (Chicken).